Here is a 249-residue protein sequence, read N- to C-terminus: O-methyltransferase adaD (249 aa).

Low complexity predominate over residues 1 to 15; sequence MSSVTLTTTTTTTST. Residues 1–26 form a disordered region; sequence MSSVTLTTTTTTTSTPPKPTPKDEPQ.

The protein belongs to the methyltransferase superfamily.

The catalysed reaction is 2-acetyl-3,4a,8,10,11,12a-hexahydroxy-1,4,4a,5,12,12a-hexahydrotetracene-1,12-dione + S-adenosyl-L-methionine = TAN-1612 + S-adenosyl-L-homocysteine + H(+). Its pathway is secondary metabolite biosynthesis. Functionally, O-methyltransferase; part of the gene cluster that mediates the biosynthesis of the linear tetracyclic TAN-1612 neuropeptide Y receptor antagonist. The decaketide backbone of TAN-1612 is synthesized by the non-reducing polyketide synthase adaA via condensation of one acetyl-CoA starter unit with 9 malonyl-CoA units. The FAD-dependent monooxygenase adaC then performs hydroxylation at C2 while the polaketide chain is still attached to the NRPKS adaA. The alpha-hydroxylation step at C2 appears to be crucial for the following C18-C1 Claisen cyclization and release of the C9-hydroxyl version of TAN-1612 from the NRPKS adaA, two steps performed by the lactamase-like protein adaB. Finally, the O-methyltransferase adaD performs the C9 O-methylation to complete the biosynthesis of TAN-1612. The chain is O-methyltransferase adaD from Aspergillus niger (strain ATCC MYA-4892 / CBS 513.88 / FGSC A1513).